The primary structure comprises 232 residues: tRNA (guanine-N(1)-)-methyltransferase (232 aa).

S-adenosyl-L-methionine contacts are provided by residues Gly-112 and 132 to 137 (IGDYIL).

Belongs to the RNA methyltransferase TrmD family. Homodimer.

It localises to the cytoplasm. It catalyses the reaction guanosine(37) in tRNA + S-adenosyl-L-methionine = N(1)-methylguanosine(37) in tRNA + S-adenosyl-L-homocysteine + H(+). Specifically methylates guanosine-37 in various tRNAs. This chain is tRNA (guanine-N(1)-)-methyltransferase, found in Methylacidiphilum infernorum (isolate V4) (Methylokorus infernorum (strain V4)).